Here is a 310-residue protein sequence, read N- to C-terminus: Homoserine kinase (310 aa).

91–101 (PLARGLGSSAA) contacts ATP.

It belongs to the GHMP kinase family. Homoserine kinase subfamily.

The protein resides in the cytoplasm. The catalysed reaction is L-homoserine + ATP = O-phospho-L-homoserine + ADP + H(+). Its pathway is amino-acid biosynthesis; L-threonine biosynthesis; L-threonine from L-aspartate: step 4/5. Its function is as follows. Catalyzes the ATP-dependent phosphorylation of L-homoserine to L-homoserine phosphate. In Bacillus pumilus (strain SAFR-032), this protein is Homoserine kinase.